A 264-amino-acid polypeptide reads, in one-letter code: MQQWNLTISNILIGLFFCFSAQASEIAPSPTISAVQNKPTITMAFYEDPKHSFHFKWAELIYTHALAQLGYRFSYELVPAIRASKMLESGKVGGEPGRIFSYGDKVSNVIRIEEPVIETQLIAFTSNPNIKITHWQSLTNTGYKVEYYRGILRAEQILNELIPETQLSESSSPITSFRKLLHDRIDIYIDSEISLQILQQTPEFAGQKIQPIANLEPLTSYGYLHKRHNQLAEPLADQLKKMKQEGLFERYKQQAKASFEDHAE.

The signal sequence occupies residues 1–23 (MQQWNLTISNILIGLFFCFSAQA).

This is an uncharacterized protein from Shewanella oneidensis (strain ATCC 700550 / JCM 31522 / CIP 106686 / LMG 19005 / NCIMB 14063 / MR-1).